We begin with the raw amino-acid sequence, 347 residues long: Ultraviolet-sensitive opsin (347 aa).

Topologically, residues 1–37 (MSGEEEFYLFKNGSIGGPWDGPQYHIAPPWAFYLQTA) are extracellular. The N-linked (GlcNAc...) asparagine glycan is linked to N12. The helical transmembrane segment at 38–58 (FMGFVFMVGTPLNAIVLVVTI) threads the bilayer. Topologically, residues 59–69 (KYKKLRQPLNY) are cytoplasmic. Residues 70-90 (ILVNISFCGFLACIICIFTVF) traverse the membrane as a helical segment. Over 91–106 (VSSSQGYFVFGKHVCA) the chain is Extracellular. Residues C105 and C182 are joined by a disulfide bond. Residues 107–127 (FEGFMGATAGLVTGWSLAFLA) traverse the membrane as a helical segment. Over 128–147 (FERYIVICKPLGNFRFTAKH) the chain is Cytoplasmic. Residues 148–168 (ALVVVVATWVIGIGVAIPPFF) traverse the membrane as a helical segment. Residues 169 to 197 (GWSRYVPEGLQCSCGPDWYTVGTKYRSEY) are Extracellular-facing. Residues 198–218 (YTWFLFIFCFIVPLSLIIFSY) traverse the membrane as a helical segment. The Cytoplasmic portion of the chain corresponds to 219-247 (SQLLSALRAVAAQQQESATTQKAEREVSR). Residues 248-268 (MVVVMVGSFCVCYVPYAALAM) traverse the membrane as a helical segment. Over 269–282 (YMVNNREHGIDLRL) the chain is Extracellular. Residues 283 to 303 (VTIPAFFSKSSCVYNPIIYCF) traverse the membrane as a helical segment. K291 carries the post-translational modification N6-(retinylidene)lysine. Residues 304-347 (MNKQFRGCIMEMVCGKPMTDDSDMSSSAQRTEVSSVSSSQVSPS) lie on the Cytoplasmic side of the membrane. C317 is lipidated: S-palmitoyl cysteine. Positions 324–347 (DSDMSSSAQRTEVSSVSSSQVSPS) are disordered. The segment covering 328–347 (SSSAQRTEVSSVSSSQVSPS) has biased composition (low complexity).

This sequence belongs to the G-protein coupled receptor 1 family. Opsin subfamily. Phosphorylated on some or all of the serine and threonine residues present in the C-terminal region. In terms of tissue distribution, cone photoreceptor cells.

It is found in the membrane. In terms of biological role, visual pigments are the light-absorbing molecules that mediate vision. They consist of an apoprotein, opsin, covalently linked to cis-retinal. The polypeptide is Ultraviolet-sensitive opsin (Melopsittacus undulatus (Budgerigar)).